The sequence spans 522 residues: Peptide chain release factor 3 (522 aa).

Residues 9–276 (KKRRTFAIIS…SFVNLAPAPQ (268 aa)) enclose the tr-type G domain. GTP is bound by residues 18–25 (SHPDAGKT), 86–90 (DTPGH), and 140–143 (NKLD).

The protein belongs to the TRAFAC class translation factor GTPase superfamily. Classic translation factor GTPase family. PrfC subfamily.

Its subcellular location is the cytoplasm. Functionally, increases the formation of ribosomal termination complexes and stimulates activities of RF-1 and RF-2. It binds guanine nucleotides and has strong preference for UGA stop codons. It may interact directly with the ribosome. The stimulation of RF-1 and RF-2 is significantly reduced by GTP and GDP, but not by GMP. This is Peptide chain release factor 3 from Lactobacillus johnsonii (strain CNCM I-12250 / La1 / NCC 533).